A 238-amino-acid chain; its full sequence is 7-cyano-7-deazaguanine synthase 1 (238 aa).

14-24 lines the ATP pocket; that stretch reads FSGGQDSATCL. Residues Cys202, Cys217, Cys220, and Cys223 each coordinate Zn(2+).

Belongs to the QueC family. Zn(2+) is required as a cofactor.

It carries out the reaction 7-carboxy-7-deazaguanine + NH4(+) + ATP = 7-cyano-7-deazaguanine + ADP + phosphate + H2O + H(+). The protein operates within purine metabolism; 7-cyano-7-deazaguanine biosynthesis. Catalyzes the ATP-dependent conversion of 7-carboxy-7-deazaguanine (CDG) to 7-cyano-7-deazaguanine (preQ(0)). In Rhodopseudomonas palustris (strain HaA2), this protein is 7-cyano-7-deazaguanine synthase 1.